Here is a 221-residue protein sequence, read N- to C-terminus: Ribonuclease T (221 aa).

The region spanning 21 to 195 is the Exonuclease domain; it reads VVIDIESAGF…YDTIQTAYLF (175 aa). Mg(2+) is bound by residues Asp24, Glu26, His182, and Asp187. Catalysis depends on His182, which acts as the Proton donor/acceptor.

It belongs to the RNase T family. Homodimer. Mg(2+) is required as a cofactor.

In terms of biological role, trims short 3' overhangs of a variety of RNA species, leaving a one or two nucleotide 3' overhang. Responsible for the end-turnover of tRNA: specifically removes the terminal AMP residue from uncharged tRNA (tRNA-C-C-A). Also appears to be involved in tRNA biosynthesis. The protein is Ribonuclease T of Buchnera aphidicola subsp. Cinara cedri (strain Cc).